A 258-amino-acid chain; its full sequence is Thiazole synthase (258 aa).

The active-site Schiff-base intermediate with DXP is K98. 1-deoxy-D-xylulose 5-phosphate-binding positions include G159, 185-186 (AG), and 207-208 (NT).

This sequence belongs to the ThiG family. As to quaternary structure, homotetramer. Forms heterodimers with either ThiH or ThiS.

It localises to the cytoplasm. It catalyses the reaction [ThiS sulfur-carrier protein]-C-terminal-Gly-aminoethanethioate + 2-iminoacetate + 1-deoxy-D-xylulose 5-phosphate = [ThiS sulfur-carrier protein]-C-terminal Gly-Gly + 2-[(2R,5Z)-2-carboxy-4-methylthiazol-5(2H)-ylidene]ethyl phosphate + 2 H2O + H(+). Its pathway is cofactor biosynthesis; thiamine diphosphate biosynthesis. Its function is as follows. Catalyzes the rearrangement of 1-deoxy-D-xylulose 5-phosphate (DXP) to produce the thiazole phosphate moiety of thiamine. Sulfur is provided by the thiocarboxylate moiety of the carrier protein ThiS. In vitro, sulfur can be provided by H(2)S. In Cytophaga hutchinsonii (strain ATCC 33406 / DSM 1761 / CIP 103989 / NBRC 15051 / NCIMB 9469 / D465), this protein is Thiazole synthase.